The chain runs to 127 residues: Probable glycine cleavage system H protein (127 aa).

In terms of domain architecture, Lipoyl-binding spans 24-106; that stretch reads TAEVGITAFA…FGDGWMLTVE (83 aa). N6-lipoyllysine is present on Lys-65.

The protein belongs to the GcvH family. In terms of assembly, the glycine cleavage system is composed of four proteins: P, T, L and H. The cofactor is (R)-lipoate.

Its function is as follows. The glycine cleavage system catalyzes the degradation of glycine. The H protein shuttles the methylamine group of glycine from the P protein to the T protein. The sequence is that of Probable glycine cleavage system H protein from Haloarcula marismortui (strain ATCC 43049 / DSM 3752 / JCM 8966 / VKM B-1809) (Halobacterium marismortui).